The chain runs to 369 residues: Serpentine receptor class epsilon-45 (369 aa).

8 helical membrane passes run 1–21 (MIFL…IFIL), 39–59 (FVLT…AIHI), 67–87 (TVLL…NILI), 127–147 (FFLG…TLLV), 169–191 (GLFF…LFFF), 195–217 (HFAV…FTYV), 258–278 (VIHA…FMYL), and 291–311 (IFES…LGSV).

It belongs to the nematode receptor-like protein sre family.

It localises to the membrane. The polypeptide is Serpentine receptor class epsilon-45 (sre-45) (Caenorhabditis elegans).